Consider the following 540-residue polypeptide: MIAVNNVSLRFADRKLFEDVNIKFTPGNCYGLIGANGAGKSTFLKVLSGEIEPQTGDVHMSPGERLAVLKQNHFEYEEYEVLKVVIMGHKRLYEVMQEKDAIYMKPDFSDEDGIRAAELEGEFAELNGWEAESEAAILLKGLGISEDLHTKKMADLGGSEKVKVLLAQALFGKPDVLLLDEPTNHLDLQAIQWLEEFLINFENTVIVVSHDRHFLNKVCTHIADLDFNKIQIYVGNYDFWYESSQLALKLSQEANKKKEEQIKQLQEFVARFSANASKSKQATSRKKLLEKITLDDIKPSSRRYPYVNFTPEREIGNDVLRVEGLTKTIDGVKVLDNVSFIMNREDKIAFTGRNELAVTTLFKIISGEMEADSGTFKWGVTTSQAYFPKDNSEYFEGSDLNLVDWLRQYSPHDQSESFLRGFLGRMLFSGEEVHKKANVLSGGEKVRCMLSKAMLSGANILILDEPTNHLDLESITALNNGLISFKGAMLFTSHDHQFVQTIANRIIEITPNGIVDKQMSYDEFLENADVQKKLTELYAE.

2 ABC transporter domains span residues 2 to 252 and 320 to 537; these read IAVN…KLSQ and LRVE…LTEL. Residue 34–41 participates in ATP binding; that stretch reads GANGAGKS.

The protein belongs to the ABC transporter superfamily.

This is an uncharacterized protein from Bacillus subtilis (strain 168).